Reading from the N-terminus, the 99-residue chain is Monothiol glutaredoxin-S11 (99 aa).

A Glutaredoxin domain is found at 1–99 (MDKVMRMSSE…LVPLVKPYLC (99 aa)). Cys-21 is a binding site for [2Fe-2S] cluster.

The protein belongs to the glutaredoxin family. CC-type subfamily.

The protein localises to the cytoplasm. Functionally, may only reduce GSH-thiol disulfides, but not protein disulfides. The polypeptide is Monothiol glutaredoxin-S11 (GRXS11) (Arabidopsis thaliana (Mouse-ear cress)).